The primary structure comprises 295 residues: uncharacterized protein (295 aa).

The N-terminal stretch at 1 to 26 (MKKYLALAAIVAICALWLTQNSNFEA) is a signal peptide.

This is an uncharacterized protein from Archaeoglobus fulgidus (strain ATCC 49558 / DSM 4304 / JCM 9628 / NBRC 100126 / VC-16).